The chain runs to 468 residues: Argininosuccinate lyase (468 aa).

The protein belongs to the lyase 1 family. Argininosuccinate lyase subfamily.

It is found in the cytoplasm. The enzyme catalyses 2-(N(omega)-L-arginino)succinate = fumarate + L-arginine. It participates in amino-acid biosynthesis; L-arginine biosynthesis; L-arginine from L-ornithine and carbamoyl phosphate: step 3/3. This chain is Argininosuccinate lyase, found in Gloeobacter violaceus (strain ATCC 29082 / PCC 7421).